Consider the following 368-residue polypeptide: Core histone macro-H2A.1 (368 aa).

Positions 2–117 constitute a Histone H2A domain; sequence SSRGGKKKST…NIHPELLAKK (116 aa). Lysine 7 and lysine 9 each carry N6-lactoyllysine; alternate. At lysine 18 the chain carries N6-methyllysine. The residue at position 116 (lysine 116) is an N6-acetyllysine; alternate. Lysine 116 is covalently cross-linked (Glycyl lysine isopeptide (Lys-Gly) (interchain with G-Cter in ubiquitin); alternate). Lysine 117 is covalently cross-linked (Glycyl lysine isopeptide (Lys-Gly) (interchain with G-Cter in ubiquitin)). Residue lysine 123 is modified to N6-acetyllysine; alternate. Lysine 123 bears the N6,N6-dimethyllysine; alternate mark. A Glycyl lysine isopeptide (Lys-Gly) (interchain with G-Cter in SUMO2); alternate cross-link involves residue lysine 123. A disordered region spans residues 128–179; it reads ITPPPAKKAKSPSQKKPVAKKTGGKKGARKSKKQGEVSKAASADSTTEGAPT. The residue at position 129 (threonine 129) is a Phosphothreonine. Residues 144–159 are compositionally biased toward basic residues; the sequence is PVAKKTGGKKGARKSK. Residue lysine 166 forms a Glycyl lysine isopeptide (Lys-Gly) (interchain with G-Cter in SUMO2) linkage. A phosphoserine mark is found at serine 169 and serine 172. In terms of domain architecture, Macro spans 183–366; it reads TVLSTKSLFL…IYVQEMAKLD (184 aa). Residue lysine 188 forms a Glycyl lysine isopeptide (Lys-Gly) (interchain with G-Cter in SUMO2) linkage. A glycoprotein-binding residues include aspartate 202, isoleucine 203, valine 225, serine 274, glycine 311, serine 312, glycine 313, and asparagine 315. Residue lysine 319 forms a Glycyl lysine isopeptide (Lys-Gly) (interchain with G-Cter in SUMO2) linkage.

It belongs to the histone H2A family. As to quaternary structure, the nucleosome is a histone octamer containing two molecules each of H2A, H2B, H3 and H4 assembled in one H3-H4 heterotetramer and two H2A-H2B heterodimers. Interacts with HDAC1 and HDAC2. Interacts with SPOP. Part of a complex consisting of MACROH2A1, CUL3 and SPOP. Interacts with PARP1. Monoubiquitinated at either Lys-116 or Lys-117. May also be polyubiquitinated. Ubiquitination is mediated by the CUL3/SPOP E3 complex and does not promote proteasomal degradation. Instead, it is required for enrichment in inactive X chromosome chromatin. In terms of tissue distribution, present only in liver and brain (at protein level). As to expression, present in brain, thymus, testis, liver and kidney (at protein level).

It localises to the nucleus. It is found in the chromosome. Functionally, variant histone H2A which replaces conventional H2A in a subset of nucleosomes where it represses transcription. Nucleosomes wrap and compact DNA into chromatin, limiting DNA accessibility to the cellular machineries which require DNA as a template. Histones thereby play a central role in transcription regulation, DNA repair, DNA replication and chromosomal stability. DNA accessibility is regulated via a complex set of post-translational modifications of histones, also called histone code, and nucleosome remodeling. Involved in stable X chromosome inactivation. Inhibits the binding of transcription factors, including NF-kappa-B, and interferes with the activity of remodeling SWI/SNF complexes. Inhibits histone acetylation by EP300 and recruits class I HDACs, which induces a hypoacetylated state of chromatin. Its function is as follows. Isoform that specifically binds poly-ADP-ribose and O-acetyl-ADP-ribose and plays a key role in NAD(+) metabolism. Able to bind to the ends of poly-ADP-ribose chains created by PARP1 and cap them. This prevents PARP1 from further addition of ADP-ribose and thus limits the consumption of nuclear NAD(+), allowing the cell to maintain proper NAD(+) levels in both the nucleus and the mitochondria to promote proper mitochondrial respiration. Increases the expression of genes involved in redox metabolism, including SOD3. In contrast to isoform 1, does not bind poly-ADP-ribose. Represses SOD3 gene expression. This Rattus norvegicus (Rat) protein is Core histone macro-H2A.1.